The chain runs to 199 residues: Octanoyltransferase (199 aa).

Residues 27–199 (SNSYDELWLL…FVQYFLTQFK (173 aa)) form the BPL/LPL catalytic domain. Substrate is bound by residues 66–73 (RGGQVTYH), 133–135 (SIG), and 146–148 (GIA). The active-site Acyl-thioester intermediate is the Cys164.

It belongs to the LipB family.

Its subcellular location is the cytoplasm. It carries out the reaction octanoyl-[ACP] + L-lysyl-[protein] = N(6)-octanoyl-L-lysyl-[protein] + holo-[ACP] + H(+). It participates in protein modification; protein lipoylation via endogenous pathway; protein N(6)-(lipoyl)lysine from octanoyl-[acyl-carrier-protein]: step 1/2. Its function is as follows. Catalyzes the transfer of endogenously produced octanoic acid from octanoyl-acyl-carrier-protein onto the lipoyl domains of lipoate-dependent enzymes. Lipoyl-ACP can also act as a substrate although octanoyl-ACP is likely to be the physiological substrate. The polypeptide is Octanoyltransferase (Legionella pneumophila (strain Lens)).